Consider the following 30-residue polypeptide: rRNA N-glycosylase (30 aa).

The protein belongs to the ribosome-inactivating protein family. Type 1 RIP subfamily. In terms of tissue distribution, expressed in seeds.

The enzyme catalyses Endohydrolysis of the N-glycosidic bond at one specific adenosine on the 28S rRNA.. Its function is as follows. Exhibits N-glycosylase activity. Catalyzes the release of one adenine from a ribosome. Acts as a ribosome-inactivating protein and inhibits protein synthesis in a rabbit-reticulocyte lysate system and in various cell lines (in vitro). The protein is rRNA N-glycosylase of Saponaria ocymoides (Rock soapwort).